The chain runs to 257 residues: Methylthioribulose-1-phosphate dehydratase (257 aa).

Cys107 is a binding site for substrate. Residues His125 and His127 each contribute to the Zn(2+) site. Catalysis depends on Glu148, which acts as the Proton donor/acceptor. His210 serves as a coordination point for Zn(2+).

The protein belongs to the aldolase class II family. MtnB subfamily. Zn(2+) serves as cofactor.

The protein localises to the cytoplasm. The enzyme catalyses 5-(methylsulfanyl)-D-ribulose 1-phosphate = 5-methylsulfanyl-2,3-dioxopentyl phosphate + H2O. Its pathway is amino-acid biosynthesis; L-methionine biosynthesis via salvage pathway; L-methionine from S-methyl-5-thio-alpha-D-ribose 1-phosphate: step 2/6. Functionally, catalyzes the dehydration of methylthioribulose-1-phosphate (MTRu-1-P) into 2,3-diketo-5-methylthiopentyl-1-phosphate (DK-MTP-1-P). The chain is Methylthioribulose-1-phosphate dehydratase from Lachancea thermotolerans (strain ATCC 56472 / CBS 6340 / NRRL Y-8284) (Yeast).